Here is a 388-residue protein sequence, read N- to C-terminus: S-adenosylmethionine synthase (388 aa).

His17 lines the ATP pocket. Asp19 lines the Mg(2+) pocket. A K(+)-binding site is contributed by Glu45. L-methionine is bound by residues Glu58 and Gln106. A flexible loop region spans residues 106-116 (QSAHISQGVDR). ATP-binding positions include 166–168 (DAK), Asp241, 247–248 (RK), Ala264, and Lys268. L-methionine is bound at residue Asp241. Lys272 is a binding site for L-methionine.

The protein belongs to the AdoMet synthase family. As to quaternary structure, homotetramer; dimer of dimers. Requires Mg(2+) as cofactor. The cofactor is K(+).

The protein resides in the cytoplasm. It carries out the reaction L-methionine + ATP + H2O = S-adenosyl-L-methionine + phosphate + diphosphate. It participates in amino-acid biosynthesis; S-adenosyl-L-methionine biosynthesis; S-adenosyl-L-methionine from L-methionine: step 1/1. Functionally, catalyzes the formation of S-adenosylmethionine (AdoMet) from methionine and ATP. The overall synthetic reaction is composed of two sequential steps, AdoMet formation and the subsequent tripolyphosphate hydrolysis which occurs prior to release of AdoMet from the enzyme. This is S-adenosylmethionine synthase from Paracoccus denitrificans (strain Pd 1222).